A 599-amino-acid polypeptide reads, in one-letter code: MRTTYCGLVSEMLLGQTVTLMGWAHRRRDHGGVIFIDLRDREGLVQVVCDPDRAEMFKAAEGVRNEFCLKIVGKVRARPAGTENANLVSGKVELLCHELEVLNPSVTPPFQLDDDNLSETTRLTHRVLDLRRPAMQKNLILRYRVAMEVRKFLDANGFIDIETPMLTKSTPEGARDYLVPSRVNEGMFFALPQSPQLFKQLLMVSGFDRYYQITKCFRDEDLRADRQPEFTQIDIETSFLDEEEIRGMFEGMIRTVFRAVMNVELPGYPVMKYAEAMHRFGSDKPDLRVKMEFTELTEVMKDVDFKVFSAPAQAKGGRVVALRVPGGGEMSRSEIDGYTEFVKIYGAKGLAWIKVNDASKGREGLQSPIVKNLHDAAIAEIIARSGARNGDLLFFGADKAKVVNDAIGALRVKIGHSDFGKSGGLFEDKWAPLWVVDFPMFEHDEEGDRWAAVHNPFTAPKDGHEDLMDTDPGKCIAKAYDMVLNGWELGGGSVRIHRAEVQSKVFSALKIGPDEAQLKFGFLLDALQYGAPPHGGLAFGLDRLVTLMTKADSIRDVIAFPKTQRAQDLLTHAPSPVDEKQLRELHIRLRNPAAGQSGV.

L-aspartate is bound at residue Glu-172. An aspartate region spans residues 196 to 199; the sequence is QLFK. Arg-218 is a binding site for L-aspartate. Residues 218-220 and Gln-227 contribute to the ATP site; that span reads RDE. His-454 serves as a coordination point for L-aspartate. Glu-488 contacts ATP. Residue Arg-495 coordinates L-aspartate. 540 to 543 is an ATP binding site; sequence GLDR.

It belongs to the class-II aminoacyl-tRNA synthetase family. Type 1 subfamily. In terms of assembly, homodimer.

It is found in the cytoplasm. It carries out the reaction tRNA(Asx) + L-aspartate + ATP = L-aspartyl-tRNA(Asx) + AMP + diphosphate. In terms of biological role, aspartyl-tRNA synthetase with relaxed tRNA specificity since it is able to aspartylate not only its cognate tRNA(Asp) but also tRNA(Asn). Reaction proceeds in two steps: L-aspartate is first activated by ATP to form Asp-AMP and then transferred to the acceptor end of tRNA(Asp/Asn). In Methylibium petroleiphilum (strain ATCC BAA-1232 / LMG 22953 / PM1), this protein is Aspartate--tRNA(Asp/Asn) ligase.